The sequence spans 491 residues: Probable malate:quinone oxidoreductase (491 aa).

It belongs to the MQO family. The cofactor is FAD.

The enzyme catalyses (S)-malate + a quinone = a quinol + oxaloacetate. The protein operates within carbohydrate metabolism; tricarboxylic acid cycle; oxaloacetate from (S)-malate (quinone route): step 1/1. The chain is Probable malate:quinone oxidoreductase from Actinobacillus pleuropneumoniae serotype 5b (strain L20).